Reading from the N-terminus, the 61-residue chain is MAKTSITVRHQRKKKFEVREYNRCPICGRSRGYLRRFDMCRICFRKLASGAQIPGVVKSSW.

Residues cysteine 24, cysteine 27, cysteine 40, and cysteine 43 each coordinate Zn(2+).

Belongs to the universal ribosomal protein uS14 family. Zinc-binding uS14 subfamily. In terms of assembly, part of the 30S ribosomal subunit. Contacts proteins S3 and S10. It depends on Zn(2+) as a cofactor.

Its function is as follows. Binds 16S rRNA, required for the assembly of 30S particles and may also be responsible for determining the conformation of the 16S rRNA at the A site. This is Small ribosomal subunit protein uS14 from Leptospira borgpetersenii serovar Hardjo-bovis (strain JB197).